The sequence spans 471 residues: Serine hydroxymethyltransferase, cytosolic (471 aa).

Position 249 is an N6-(pyridoxal phosphate)lysine (Lys-249).

Belongs to the SHMT family. Pyridoxal 5'-phosphate serves as cofactor.

The protein localises to the cytoplasm. It is found in the cytosol. The catalysed reaction is (6R)-5,10-methylene-5,6,7,8-tetrahydrofolate + glycine + H2O = (6S)-5,6,7,8-tetrahydrofolate + L-serine. It participates in one-carbon metabolism; tetrahydrofolate interconversion. In terms of biological role, catalyzes the interconversion of serine and glycine. Essential for viability and required for virulence in a murine model of established pulmonary infection. This Aspergillus fumigatus (strain ATCC MYA-4609 / CBS 101355 / FGSC A1100 / Af293) (Neosartorya fumigata) protein is Serine hydroxymethyltransferase, cytosolic.